We begin with the raw amino-acid sequence, 381 residues long: L-lactate dehydrogenase (381 aa).

In terms of domain architecture, FMN hydroxy acid dehydrogenase spans 1–380 (MIISSTNDYR…TRDALVDLSK (380 aa)). Tyr24 serves as a coordination point for substrate. Residues Ser106 and Gln127 each coordinate FMN. Tyr129 is a binding site for substrate. An FMN-binding site is contributed by Thr155. Arg164 is a substrate binding site. Lys251 contributes to the FMN binding site. His275 serves as the catalytic Proton acceptor. Position 278 (Arg278) interacts with substrate. Position 306–330 (306–330 (DSGIRNGLDIVRMLALGADATMLGR)) interacts with FMN.

The protein belongs to the FMN-dependent alpha-hydroxy acid dehydrogenase family. FMN serves as cofactor.

The protein resides in the cell inner membrane. The catalysed reaction is (S)-lactate + A = pyruvate + AH2. Its function is as follows. Catalyzes the conversion of L-lactate to pyruvate. Is coupled to the respiratory chain. The protein is L-lactate dehydrogenase of Actinobacillus pleuropneumoniae serotype 3 (strain JL03).